We begin with the raw amino-acid sequence, 380 residues long: Transmembrane protein 229A (380 aa).

Residues 1-40 form a disordered region; sequence MAGSDVDSEGPARRGGAARRPGAPGGPGSEAAAGCPEPLS. 2 consecutive transmembrane segments (helical) span residues 51–71 and 117–137; these read LPAW…DVLV and AFVF…TLAG. The segment at 188–236 is disordered; it reads RQQQQQQQQQQQQRRGALPVPPGARVPTAAGARRRRPRGPRGAGGAPSQ. The span at 190-202 shows a compositional bias: low complexity; that stretch reads QQQQQQQQQQQRR. The next 4 helical transmembrane spans lie at 244 to 264, 278 to 298, 310 to 330, and 343 to 363; these read FLFF…FFNV, LWSF…YFHL, VPIY…GLRT, and LNFM…LSVY.

The protein belongs to the TMEM229 family.

It is found in the membrane. The polypeptide is Transmembrane protein 229A (TMEM229A) (Homo sapiens (Human)).